Reading from the N-terminus, the 86-residue chain is Secreted transmembrane peptide 6 (86 aa).

A signal peptide spans 1 to 31 (MGMKSPNIAAFMLPLLLILFTLSSQLKVVES). The SCOOP motif signature appears at 45 to 58 (IVYTPPSRSCGTSP). The short motif at 51–53 (SRS) is the SxS motif essential for MIK2 binding element.

The protein belongs to the serine rich endogenous peptide (SCOOP) phytocytokine family. As to quaternary structure, interacts with MIK2 (via extracellular leucine-rich repeat domain); this interaction triggers the formation of complex between MIK2 and the BAK1/SERK3 and SERK4 coreceptors, and subsequent BAK1 activation by phosphorylation. In terms of tissue distribution, mostly expressed in leaves, and, to a lower extent, in roots, stems, siliques, seeds and flowers.

It localises to the cell membrane. It is found in the secreted. The protein resides in the extracellular space. The protein localises to the apoplast. Functionally, brassicaceae-specific phytocytokine (plant endogenous peptide released into the apoplast) perceived by MIK2 in a BAK1/SERK3 and SERK4 coreceptors-dependent manner, that modulates various physiological and antimicrobial processes including growth prevention and reactive oxygen species (ROS) response regulation. Prevents general growth and development. The chain is Secreted transmembrane peptide 6 from Arabidopsis thaliana (Mouse-ear cress).